A 720-amino-acid chain; its full sequence is Engulfment and cell motility protein 2 (720 aa).

Position 48 is a phosphotyrosine (Tyr48). In terms of domain architecture, ELMO spans 311–485 (AQRDIIFELR…VVREQITRAL (175 aa)). Position 503 is a phosphoserine (Ser503). The PH domain occupies 553–674 (SSFRKIGNRR…LLGKDMSSEL (122 aa)). An SH3-binding motif is present at residues 700 to 707 (PEAPPPIP). Tyr717 carries the post-translational modification Phosphotyrosine.

In terms of assembly, interacts with the SH3-domain of DOCK1 via its SH3-binding site. Probably part of a complex with DOCK1 and RAC1. Probably part of a complex with DOCK1 and CRK isoform CRK-II. Interacts with ARHGEF16, DOCK4 and EPHA2; mediates activation of RAC1 by EPHA2. Interacts with ADGRB3. Interacts with AUTS2; the interaction is direct. In terms of tissue distribution, widely expressed, with a higher expression in skeletal muscle, kidney and placenta.

It is found in the cytoplasm. Its subcellular location is the cytosol. The protein localises to the membrane. Involved in cytoskeletal rearrangements required for phagocytosis of apoptotic cells and cell motility. Acts in association with DOCK1 and CRK. Was initially proposed to be required in complex with DOCK1 to activate Rac Rho small GTPases. May enhance the guanine nucleotide exchange factor (GEF) activity of DOCK1. This is Engulfment and cell motility protein 2 (ELMO2) from Homo sapiens (Human).